The following is a 107-amino-acid chain: Nucleoid-associated protein RF_1365 (107 aa).

The protein belongs to the YbaB/EbfC family. In terms of assembly, homodimer.

It is found in the cytoplasm. The protein resides in the nucleoid. In terms of biological role, binds to DNA and alters its conformation. May be involved in regulation of gene expression, nucleoid organization and DNA protection. This Rickettsia felis (strain ATCC VR-1525 / URRWXCal2) (Rickettsia azadi) protein is Nucleoid-associated protein RF_1365.